We begin with the raw amino-acid sequence, 1620 residues long: Probable serine/threonine-protein kinase gdt4 (1620 aa).

The N-terminal stretch at 1 to 19 (MKLEQRIFFLICLVINSFS) is a signal peptide. Topologically, residues 20–891 (NCSLLVAPDG…EVIGINEQLN (872 aa)) are extracellular. The helical transmembrane segment at 892–912 (ILAIVLPITISLFAAASILAG) threads the bilayer. Topologically, residues 913 to 1620 (YLVIKKYKKP…AKRNKKNQNQ (708 aa)) are cytoplasmic. Residues 1349–1604 (IVLEKYLSEG…TLIDLLEKLL (256 aa)) form the Protein kinase domain. Residues 1355–1363 (LSEGSFGVV) and Lys-1376 contribute to the ATP site. Catalysis depends on Asp-1466, which acts as the Proton acceptor.

The protein in the N-terminal section; belongs to the GDT family. In the C-terminal section; belongs to the protein kinase superfamily. TKL Ser/Thr protein kinase family.

It is found in the membrane. The enzyme catalyses L-seryl-[protein] + ATP = O-phospho-L-seryl-[protein] + ADP + H(+). The catalysed reaction is L-threonyl-[protein] + ATP = O-phospho-L-threonyl-[protein] + ADP + H(+). The protein is Probable serine/threonine-protein kinase gdt4 (gdt4) of Dictyostelium discoideum (Social amoeba).